A 653-amino-acid chain; its full sequence is Asparagine--tRNA ligase, cytoplasmic (653 aa).

This sequence belongs to the class-II aminoacyl-tRNA synthetase family.

It localises to the cytoplasm. It catalyses the reaction tRNA(Asn) + L-asparagine + ATP = L-asparaginyl-tRNA(Asn) + AMP + diphosphate + H(+). The polypeptide is Asparagine--tRNA ligase, cytoplasmic (asnS1) (Dictyostelium discoideum (Social amoeba)).